The sequence spans 349 residues: MQGLGALFLLLTACLTLKADNVPTLPDIQVQENFNEARIYGKWFNLAVGSTCPWLRRIKNKMSVSTLVLQEGATEAEISVTSTQWRKGVCEEISGVYQKTDIDGKFLYHKSKWNATLESYVVHTNYDEYAIFLTKKFSHRHGPTITAKLYGREPQLRDSLLQEFREVALSVGIPENSIVFMADRGECVPGDREVESTSFARARRAVLPQENEGSGSEPLITGTLKKEDSCQLNYSEGPCLGMQQKYYYNGASMACETFQYGGCLGNGNNFASEKECLQTCRTIAACNLPIVQGPCRAFAELWAFDAAQGKCIQFIYGGCKGNGNKFYSEKECKEYCGVPGDGYEELTRS.

An N-terminal signal peptide occupies residues 1 to 19 (MQGLGALFLLLTACLTLKA). 2 residues coordinate 3-hydroxy-L-kynurenine: C52 and K110. C90 and C187 are joined by a disulfide. N114 carries N-linked (GlcNAc...) asparagine glycosylation. 3-hydroxy-L-kynurenine-binding residues include K136 and K148. A glycan (O-linked (Xyl...) (chondroitin sulfate) serine) is linked at S214. Intrachain disulfides connect C230-C280, C239-C263, C255-C276, C286-C336, C295-C319, and C311-C332. 2 consecutive BPTI/Kunitz inhibitor domains span residues 230–280 (CQLN…LQTC) and 286–336 (CNLP…KEYC). Residue N233 is glycosylated (N-linked (GlcNAc...) asparagine).

It in the N-terminal section; belongs to the calycin superfamily. Lipocalin family. As to quaternary structure, monomer. Homodimer. In plasma, it occurs as a monomer or dimer and in covalently-linked complexes with immunoglobulin A (IgA), ALB/albumin and F2/prothrombin. Chromophore-bound alpha-1-microglobulin interacts with the constant region of immunoglobulin A. Chromophore-bound alpha-1-microglobulin interacts with ALB with molar ratio 2:1 and 1:1; this interaction does not prevent fatty acid binding to ALB. Interacts with F2/prothrombin (via N-terminus) with molar ratio 2:1 and 1:1; this interaction does not prevent the activation of prothrombin to thrombin. Interacts with NDUFAB1, a subunit of mitochondrial complex I. Interacts with FN1. I-alpha-I plasma protease inhibitors are assembled from one or two heavy chains (HC) and one light chain, bikunin. Inter-alpha-inhibitor (I-alpha-I) is composed of ITIH1/HC1, ITIH2/HC2 and bikunin, and pre-alpha-inhibitor (P-alpha-I) of ITIH3/HC3 and bikunin. Interacts with TNFAIP6 (via Link domain). In terms of assembly, monomer. Also occurs as a complex with tryptase in mast cells. In terms of processing, the precursor is proteolytically processed into separately functioning proteins. 3-hydroxykynurenine, an oxidized tryptophan metabolite that is common in biological fluids, reacts with Cys-53, Lys-111, Lys-137, and Lys-149 to form heterogeneous polycyclic chromophores including hydroxanthommatin. The reaction by alpha-1-microglobulin is autocatalytic; the human protein forms chromophore even when expressed in insect and bacterial cells. The chromophore can react with accessible cysteines forming non-reducible thioether cross-links with other molecules of alpha-1-microglobulin or with other proteins such as Ig alpha-1 chain C region 'Cys-352'. Post-translationally, heavy chains are interlinked with bikunin via a chondroitin 4-sulfate bridge to the C-terminal aspartate. In terms of processing, proteolytically cleaved by PRSS3 at Kunitz domain 2. In terms of tissue distribution, expressed by the liver and secreted in plasma.

The protein resides in the secreted. It localises to the endoplasmic reticulum. The protein localises to the cytoplasm. Its subcellular location is the cytosol. It is found in the cell membrane. The protein resides in the nucleus membrane. It localises to the mitochondrion inner membrane. The protein localises to the extracellular space. Its subcellular location is the extracellular matrix. In terms of biological role, antioxidant and tissue repair protein with reductase, heme-binding and radical-scavenging activities. Removes and protects against harmful oxidants and repairs macromolecules in intravascular and extravascular spaces and in intracellular compartments. Intravascularly, plays a regulatory role in red cell homeostasis by preventing heme- and reactive oxygen species-induced cell damage. Binds and degrades free heme to protect fetal and adult red blood cells from hemolysis. Reduces extracellular methemoglobin, a Fe3+ (ferric) form of hemoglobin that cannot bind oxygen, back to the Fe2+ (ferrous) form deoxyhemoglobin, which has oxygen-carrying potential. Upon acute inflammation, inhibits oxidation of low-density lipoprotein particles by MPO and limits vascular damage. Extravascularly, protects from oxidation products formed on extracellular matrix structures and cell membranes. Catalyzes the reduction of carbonyl groups on oxidized collagen fibers and preserves cellular and extracellular matrix ultrastructures. Importantly, counteracts the oxidative damage at blood-placenta interface, preventing leakage of free fetal hemoglobin into the maternal circulation. Intracellularly, has a role in maintaining mitochondrial redox homeostasis. Bound to complex I of the respiratory chain of mitochondria, may scavenge free radicals and preserve mitochondrial ATP synthesis. Protects renal tubule epithelial cells from heme-induced oxidative damage to mitochondria. Reduces cytochrome c from Fe3+ (ferric) to the Fe2+ (ferrous) state through formation of superoxide anion radicals in the presence of ascorbate or NADH/NADPH electron donor cofactors, ascorbate being the preferred cofactor. Has a chaperone role in facilitating the correct folding of bikunin in the endoplasmic reticulum compartment. Functionally, kunitz-type serine protease inhibitor and structural component of extracellular matrix with a role in extracellular space remodeling and cell adhesion. Among others, has antiprotease activity toward kallikrein, a protease involved in airway inflammation; inhibits GZMK/granzyme, a granule-stored serine protease involved in NK and T cell cytotoxic responses; and inhibits PLG/plasmin, a protease required for activation of matrix metalloproteinases. As part of I-alpha-I complex, provides for the heavy chains to be transferred from I-alpha-I complex to hyaluronan in the presence of TNFAIP6, in a dynamic process that releases free bikunin and remodels extracellular matrix proteoglycan structures. Free bikunin, but not its heavy chain-bound form, acts as a potent protease inhibitor in airway secretions. Part of hyaluronan-rich extracellular matrix that surrounds oocyte during cumulus oophorus expansion, an indispensable process for proper ovulation. Also inhibits calcium oxalate crystallization. Kunitz-type serine protease inhibitor. Has high catalytic efficiency for F10/blood coagulation factor Xa and may act as an anticoagulant by inhibiting prothrombin activation. Inhibits trypsin and mast cell CMA1/chymase and tryptase proteases. In Rattus norvegicus (Rat), this protein is Protein AMBP (Ambp).